A 266-amino-acid chain; its full sequence is Blue copper protein (266 aa).

Residues 1–24 (MAYSKILFCFMIGFVGFLPAITMA) form the signal peptide. 3 consecutive Phytocyanin domains span residues 25–56 (TQYLVGDDRGWTLDFDYQTWAKNKTFKVGDTL), 57–102 (APPP…TVED), and 116–216 (TEYW…TVEG). An N-linked (GlcNAc...) asparagine glycan is attached at Asn-47. Position 156 (His-156) interacts with Cu cation. Asn-162 carries N-linked (GlcNAc...) asparagine glycosylation. Cys-169 and Cys-203 are disulfide-bonded. Residues Cys-197, His-202, and Gln-208 each contribute to the Cu cation site. The chain crosses the membrane as a helical span at residues 245–265 (ITSPYKMFVGGAVSIWTILTL).

It localises to the membrane. The polypeptide is Blue copper protein (Petunia hybrida (Petunia)).